The primary structure comprises 512 residues: FAD-linked oxidoreductase iacH (512 aa).

Residues 1–22 (MVSLKACVVAYGFTLLPALVSG) form the signal peptide. 8 N-linked (GlcNAc...) asparagine glycosylation sites follow: N39, N55, N69, N210, N217, N278, N295, and N367. The region spanning 77-248 (LDTPDVQLVV…TSLEKKIYPG (172 aa)) is the FAD-binding PCMH-type domain.

This sequence belongs to the oxygen-dependent FAD-linked oxidoreductase family. It depends on FAD as a cofactor.

It participates in secondary metabolite biosynthesis. FAD-linked oxidoreductase; part of the gene cluster that mediates the biosynthesis of iso-A82775C, a enylepoxycyclohexane and biosynthetic precursor of the chloropestolide anticancer natural products. Within the cluster, the prenyltransferase iacE prenylates siccayne to generate pestalodiol E, using dimethylallyl diphosphate (DMAPP) as cosubstrate. The probable oxidoreductase iacF is then involved in the epoxidation of pestalodiol F to pestalodiol F, which is further converted to pestalofone A by the short-chain dehydrogenase/reductase iacG. Iso-A82775C is subsequently generated from pestalofone A by the short-chain dehydrogenase/reductase iacC. Iso-A82775C is further condensed with maldoxin via a Diels-Alder reaction to produce the anticancer natural products chloropestolides A to E. This Pestalotiopsis fici (strain W106-1 / CGMCC3.15140) protein is FAD-linked oxidoreductase iacH.